Consider the following 141-residue polypeptide: Small ribosomal subunit protein eS17z (141 aa).

It belongs to the eukaryotic ribosomal protein eS17 family.

This Arabidopsis thaliana (Mouse-ear cress) protein is Small ribosomal subunit protein eS17z (RPS17A).